Consider the following 406-residue polypeptide: Cholinephosphotransferase 1 (406 aa).

The residue at position 2 (Ala-2) is an N-acetylalanine. The Cytoplasmic segment spans residues 2 to 62 (AAGAGAGSAP…LLQWIPLWMA (61 aa)). A helical membrane pass occupies residues 63 to 83 (PNSITLLGLAVNVVTTLVLIS). Asn-64 is a CDP-choline binding site. At 84 to 93 (YCPTATEEAP) the chain is on the lumenal side. A helical transmembrane segment spans residues 94-118 (YWTYLLCALGLFIYQSLDAIDGKQA). Mg(2+)-binding residues include Asp-111 and Asp-114. Position 119 (Arg-119) interacts with CDP-choline. Topologically, residues 119–125 (RRTNSCS) are cytoplasmic. The helical transmembrane segment at 126 to 150 (PLGELFDHGCDSLSTVFMAVGASIA) threads the bilayer. Asp-132 serves as a coordination point for Mg(2+). His-133 serves as the catalytic Proton acceptor. Mg(2+) is bound at residue Asp-136. Topologically, residues 151–160 (ARLGTYPDWF) are lumenal. A helical transmembrane segment spans residues 161–179 (FFCSFIGMFVFYCAHWQTY). At 180-190 (VSGMLRFGKVD) the chain is on the cytoplasmic side. Residues 191–207 (VTEIQIALVIVFVLSAF) traverse the membrane as a helical segment. Residues 208 to 222 (GGATMWDYTIPILEI) lie on the Lumenal side of the membrane. Residues 223 to 248 (KLKILPVLGFLGGVIFSCSNYFHVIL) form a helical membrane-spanning segment. Over 249–265 (HGGVGKNGSTIAGTSVL) the chain is Cytoplasmic. A helical transmembrane segment spans residues 266-281 (SPGLHIGLIIILAIMI). The Lumenal portion of the chain corresponds to 282-293 (YKKSATDVFEKH). The helical transmembrane segment at 294–316 (PCLYILMFGCVFAKVSQKLVVAH) threads the bilayer. The Cytoplasmic portion of the chain corresponds to 317–329 (MTKSELYLQDTVF). The helical transmembrane segment at 330–339 (LGPGLLFLDQ) threads the bilayer. At 340-346 (YFNNFID) the chain is on the lumenal side. Residues 347-376 (EYVVLWMAMVISSFDMVIYFSALCLQISRH) form a helical membrane-spanning segment. Over 377–406 (LHLNIFKTACHQAPEQVQVLSSKSHQNNMD) the chain is Cytoplasmic.

It belongs to the CDP-alcohol phosphatidyltransferase class-I family. Requires Mg(2+) as cofactor. Mn(2+) is required as a cofactor. In terms of tissue distribution, highly expressed in testis, colon, small intestine, heart, prostate and spleen. Also detected in kidney, skeletal muscle, pancreas, leukocytes, ovary and thymus. Weakly expressed in the brain, placenta and lung. Overexpressed in cancerous breast epithelial cell lines.

The protein localises to the golgi apparatus membrane. It catalyses the reaction CDP-choline + a 1,2-diacyl-sn-glycerol = a 1,2-diacyl-sn-glycero-3-phosphocholine + CMP + H(+). The enzyme catalyses 1-octadecanoyl-2-(5Z,8Z,11Z,14Z-eicosatetraenoyl)-sn-glycerol + CDP-choline = 1-octadecanoyl-2-(5Z,8Z,11Z,14Z-eicosatetraenoyl)-sn-glycero-3-phosphocholine + CMP + H(+). The catalysed reaction is 1-hexadecanoyl-2-(9Z-octadecenoyl)-sn-glycerol + CDP-choline = 1-hexadecanoyl-2-(9Z-octadecenoyl)-sn-glycero-3-phosphocholine + CMP + H(+). It carries out the reaction 1-hexadecanoyl-2-(4Z,7Z,10Z,13Z,16Z,19Z-docosahexaenoyl)-sn-glycerol + CDP-choline = 1-hexadecanoyl-2-(4Z,7Z,10Z,13Z,16Z,19Z-docosahexaenoyl)-sn-glycero-3-phosphocholine + CMP + H(+). It catalyses the reaction 1,2-dioctanoyl-sn-glycerol + CDP-choline = 1,2-dioctanoyl-sn-glycero-3-phosphocholine + CMP + H(+). The protein operates within phospholipid metabolism; phosphatidylcholine biosynthesis; phosphatidylcholine from phosphocholine: step 2/2. In terms of biological role, catalyzes the final step of de novo phosphatidylcholine (PC) synthesis, i.e. the transfer of choline phosphate from CDP-choline to the free hydroxyl of a diacylglycerol (DAG), producing a PC. It thereby plays a central role in the formation and maintenance of vesicular membranes. The sequence is that of Cholinephosphotransferase 1 from Homo sapiens (Human).